The following is a 199-amino-acid chain: Superoxide dismutase [Mn/Fe] (199 aa).

His27, His81, Asp161, and His165 together coordinate Fe(3+). The Mn(2+) site is built by His27, His81, Asp161, and His165.

The protein belongs to the iron/manganese superoxide dismutase family. Homodimer. It depends on Mn(2+) as a cofactor. Requires Fe(3+) as cofactor.

It catalyses the reaction 2 superoxide + 2 H(+) = H2O2 + O2. Destroys superoxide anion radicals which are normally produced within the cells and which are toxic to biological systems. Catalyzes the dismutation of superoxide anion radicals into O2 and H2O2 by successive reduction and oxidation of the transition metal ion at the active site. The protein is Superoxide dismutase [Mn/Fe] (sodA) of Staphylococcus epidermidis.